Here is a 67-residue protein sequence, read N- to C-terminus: Large ribosomal subunit protein uL29 (67 aa).

The protein belongs to the universal ribosomal protein uL29 family.

The sequence is that of Large ribosomal subunit protein uL29 from Cereibacter sphaeroides (strain ATCC 17025 / ATH 2.4.3) (Rhodobacter sphaeroides).